A 251-amino-acid chain; its full sequence is 3-deoxy-manno-octulosonate cytidylyltransferase (251 aa).

It belongs to the KdsB family.

It localises to the cytoplasm. It carries out the reaction 3-deoxy-alpha-D-manno-oct-2-ulosonate + CTP = CMP-3-deoxy-beta-D-manno-octulosonate + diphosphate. It functions in the pathway nucleotide-sugar biosynthesis; CMP-3-deoxy-D-manno-octulosonate biosynthesis; CMP-3-deoxy-D-manno-octulosonate from 3-deoxy-D-manno-octulosonate and CTP: step 1/1. The protein operates within bacterial outer membrane biogenesis; lipopolysaccharide biosynthesis. Functionally, activates KDO (a required 8-carbon sugar) for incorporation into bacterial lipopolysaccharide in Gram-negative bacteria. The sequence is that of 3-deoxy-manno-octulosonate cytidylyltransferase from Chelativorans sp. (strain BNC1).